We begin with the raw amino-acid sequence, 173 residues long: Co-chaperone protein HscB homolog (173 aa).

In terms of domain architecture, J spans 5-77 (CHYALFDLQP…PRRARYLLAI (73 aa)).

This sequence belongs to the HscB family. In terms of assembly, interacts with HscA and stimulates its ATPase activity.

In terms of biological role, co-chaperone involved in the maturation of iron-sulfur cluster-containing proteins. Seems to help targeting proteins to be folded toward HscA. The protein is Co-chaperone protein HscB homolog of Pseudomonas entomophila (strain L48).